A 329-amino-acid polypeptide reads, in one-letter code: DNA-directed RNA polymerase subunit alpha (329 aa).

The alpha N-terminal domain (alpha-NTD) stretch occupies residues 1 to 234; it reads MQGSVTEFLK…EQLDAFVELR (234 aa). The alpha C-terminal domain (alpha-CTD) stretch occupies residues 248 to 329; the sequence is FDPILLRPVD…WPPASLADDL (82 aa).

Belongs to the RNA polymerase alpha chain family. In terms of assembly, homodimer. The RNAP catalytic core consists of 2 alpha, 1 beta, 1 beta' and 1 omega subunit. When a sigma factor is associated with the core the holoenzyme is formed, which can initiate transcription.

The catalysed reaction is RNA(n) + a ribonucleoside 5'-triphosphate = RNA(n+1) + diphosphate. Its function is as follows. DNA-dependent RNA polymerase catalyzes the transcription of DNA into RNA using the four ribonucleoside triphosphates as substrates. The protein is DNA-directed RNA polymerase subunit alpha of Shewanella baltica (strain OS155 / ATCC BAA-1091).